A 241-amino-acid chain; its full sequence is Urease accessory protein UreF 1 (241 aa).

It belongs to the UreF family. As to quaternary structure, ureD, UreF and UreG form a complex that acts as a GTP-hydrolysis-dependent molecular chaperone, activating the urease apoprotein by helping to assemble the nickel containing metallocenter of UreC. The UreE protein probably delivers the nickel.

Its subcellular location is the cytoplasm. In terms of biological role, required for maturation of urease via the functional incorporation of the urease nickel metallocenter. This Brucella melitensis biotype 1 (strain ATCC 23456 / CCUG 17765 / NCTC 10094 / 16M) protein is Urease accessory protein UreF 1.